We begin with the raw amino-acid sequence, 199 residues long: Glycerol-3-phosphate acyltransferase (199 aa).

A run of 5 helical transmembrane segments spans residues alanine 5–cysteine 25, alanine 54–phenylalanine 74, alanine 82–phenylalanine 102, valine 114–phenylalanine 134, and tyrosine 154–isoleucine 174.

Belongs to the PlsY family. Probably interacts with PlsX.

Its subcellular location is the cell inner membrane. The enzyme catalyses an acyl phosphate + sn-glycerol 3-phosphate = a 1-acyl-sn-glycero-3-phosphate + phosphate. It participates in lipid metabolism; phospholipid metabolism. Its function is as follows. Catalyzes the transfer of an acyl group from acyl-phosphate (acyl-PO(4)) to glycerol-3-phosphate (G3P) to form lysophosphatidic acid (LPA). This enzyme utilizes acyl-phosphate as fatty acyl donor, but not acyl-CoA or acyl-ACP. This is Glycerol-3-phosphate acyltransferase from Haemophilus ducreyi (strain 35000HP / ATCC 700724).